The sequence spans 257 residues: Large ribosomal subunit protein uL2 (257 aa).

The interval 207–230 is disordered; sequence VEHPFGGGNHQHIGKPSTIRRDAP.

Belongs to the universal ribosomal protein uL2 family. In terms of assembly, component of the large ribosomal subunit.

It is found in the cytoplasm. In terms of biological role, component of the large ribosomal subunit. The ribosome is a large ribonucleoprotein complex responsible for the synthesis of proteins in the cell. In Danio rerio (Zebrafish), this protein is Large ribosomal subunit protein uL2 (rpl8).